We begin with the raw amino-acid sequence, 272 residues long: Phosphatidylglycerol--prolipoprotein diacylglyceryl transferase (272 aa).

The next 7 membrane-spanning stretches (helical) occupy residues 17–37 (LQVH…WGLA), 55–75 (LVFY…VLFY), 90–110 (VWTG…AMLF), 125–145 (FVAP…FIGG), 174–194 (PSQI…LWWF), 202–222 (MAVS…MEFF), and 230–250 (GFIL…MLLI). Arg-138 contributes to the a 1,2-diacyl-sn-glycero-3-phospho-(1'-sn-glycerol) binding site.

Belongs to the Lgt family.

Its subcellular location is the cell inner membrane. It catalyses the reaction L-cysteinyl-[prolipoprotein] + a 1,2-diacyl-sn-glycero-3-phospho-(1'-sn-glycerol) = an S-1,2-diacyl-sn-glyceryl-L-cysteinyl-[prolipoprotein] + sn-glycerol 1-phosphate + H(+). It functions in the pathway protein modification; lipoprotein biosynthesis (diacylglyceryl transfer). Catalyzes the transfer of the diacylglyceryl group from phosphatidylglycerol to the sulfhydryl group of the N-terminal cysteine of a prolipoprotein, the first step in the formation of mature lipoproteins. The protein is Phosphatidylglycerol--prolipoprotein diacylglyceryl transferase of Acinetobacter baumannii (strain AB307-0294).